The sequence spans 304 residues: Ribonuclease Z (304 aa).

Zn(2+) contacts are provided by histidine 63, histidine 65, aspartate 67, histidine 68, histidine 143, aspartate 213, and histidine 271. Aspartate 67 functions as the Proton acceptor in the catalytic mechanism.

The protein belongs to the RNase Z family. In terms of assembly, homodimer. The cofactor is Zn(2+).

The catalysed reaction is Endonucleolytic cleavage of RNA, removing extra 3' nucleotides from tRNA precursor, generating 3' termini of tRNAs. A 3'-hydroxy group is left at the tRNA terminus and a 5'-phosphoryl group is left at the trailer molecule.. In terms of biological role, zinc phosphodiesterase, which displays some tRNA 3'-processing endonuclease activity. Probably involved in tRNA maturation, by removing a 3'-trailer from precursor tRNA. The polypeptide is Ribonuclease Z (Parabacteroides distasonis (strain ATCC 8503 / DSM 20701 / CIP 104284 / JCM 5825 / NCTC 11152)).